We begin with the raw amino-acid sequence, 132 residues long: Large-conductance mechanosensitive channel (132 aa).

A run of 3 helical transmembrane segments spans residues 14 to 34 (VLDM…VDSL), 39 to 59 (INPI…AVTI), and 68 to 88 (IGNF…VFLI).

It belongs to the MscL family. In terms of assembly, homopentamer.

It is found in the cell membrane. Functionally, channel that opens in response to stretch forces in the membrane lipid bilayer. May participate in the regulation of osmotic pressure changes within the cell. The protein is Large-conductance mechanosensitive channel of Latilactobacillus sakei subsp. sakei (strain 23K) (Lactobacillus sakei subsp. sakei).